The sequence spans 360 residues: uncharacterized protein (360 aa).

Residues 4-235 enclose the ABC transporter domain; the sequence is LSLQHIQKIY…PANMFVAGFI (232 aa). Residue 37-44 coordinates ATP; sequence GPSGCGKS.

Belongs to the ABC transporter superfamily.

This is an uncharacterized protein from Escherichia coli O6:K15:H31 (strain 536 / UPEC).